We begin with the raw amino-acid sequence, 427 residues long: Histidine--tRNA ligase (427 aa).

It belongs to the class-II aminoacyl-tRNA synthetase family. As to quaternary structure, homodimer.

The protein localises to the cytoplasm. It catalyses the reaction tRNA(His) + L-histidine + ATP = L-histidyl-tRNA(His) + AMP + diphosphate + H(+). The sequence is that of Histidine--tRNA ligase from Streptococcus suis (strain 98HAH33).